A 257-amino-acid chain; its full sequence is Urease accessory protein UreD 3 (257 aa).

Residues 1–22 form a disordered region; sequence MSVRATARLRAEPDGRDGTALP.

This sequence belongs to the UreD family. In terms of assembly, ureD, UreF and UreG form a complex that acts as a GTP-hydrolysis-dependent molecular chaperone, activating the urease apoprotein by helping to assemble the nickel containing metallocenter of UreC. The UreE protein probably delivers the nickel.

The protein localises to the cytoplasm. Its function is as follows. Required for maturation of urease via the functional incorporation of the urease nickel metallocenter. The polypeptide is Urease accessory protein UreD 3 (Streptomyces griseus subsp. griseus (strain JCM 4626 / CBS 651.72 / NBRC 13350 / KCC S-0626 / ISP 5235)).